The primary structure comprises 485 residues: Tektin-5 (485 aa).

4 coiled-coil regions span residues 113–185, 225–251, 342–385, and 423–443; these read SRLT…EVNC, QQQM…ALER, FNAR…MAKE, and DDTL…LQLL.

It belongs to the tektin family. Microtubule inner protein component of sperm flagellar doublet microtubules. Interacts with TEKT3. Ubiquitinated, leading to its degradation. Deubiquitinated by USP16, promoting its stability.

Its subcellular location is the cytoplasm. The protein resides in the cytoskeleton. It localises to the flagellum axoneme. Functionally, sperm-specific microtubule inner protein (MIP) part of the dynein-decorated doublet microtubules (DMTs) in flagellar axoneme. Forms an extensive interaction network in different conformations that reinforces the helix bundle composed by other tektin proteins (TEKT1 to TEKT4) and MIPs to anchor the tektin bundle onto the tubulin wall of A-tubule of the sperm flagellum. In Macaca fascicularis (Crab-eating macaque), this protein is Tektin-5 (TEKT5).